Here is a 201-residue protein sequence, read N- to C-terminus: NADH-quinone oxidoreductase subunit I (201 aa).

4Fe-4S ferredoxin-type domains are found at residues 78–107 (MSYE…RIEA) and 116–147 (KVVR…MTDI). [4Fe-4S] cluster contacts are provided by C87, C90, C93, C97, C127, C130, C133, and C137.

It belongs to the complex I 23 kDa subunit family. NDH-1 is composed of 14 different subunits. Subunits NuoA, H, J, K, L, M, N constitute the membrane sector of the complex. [4Fe-4S] cluster is required as a cofactor.

It localises to the cell inner membrane. The enzyme catalyses a quinone + NADH + 5 H(+)(in) = a quinol + NAD(+) + 4 H(+)(out). Functionally, NDH-1 shuttles electrons from NADH, via FMN and iron-sulfur (Fe-S) centers, to quinones in the respiratory chain. The immediate electron acceptor for the enzyme in this species is believed to be ubiquinone. Couples the redox reaction to proton translocation (for every two electrons transferred, four hydrogen ions are translocated across the cytoplasmic membrane), and thus conserves the redox energy in a proton gradient. In Aquifex aeolicus (strain VF5), this protein is NADH-quinone oxidoreductase subunit I.